The sequence spans 215 residues: Ribonuclease HII (215 aa).

Residues 19 to 213 (QTVAGVDEVG…SLRQPSQQID (195 aa)) enclose the RNase H type-2 domain. A divalent metal cation is bound by residues aspartate 25, glutamate 26, and aspartate 121.

It belongs to the RNase HII family. It depends on Mn(2+) as a cofactor. The cofactor is Mg(2+).

It localises to the cytoplasm. The enzyme catalyses Endonucleolytic cleavage to 5'-phosphomonoester.. Functionally, endonuclease that specifically degrades the RNA of RNA-DNA hybrids. In Synechococcus elongatus (strain ATCC 33912 / PCC 7942 / FACHB-805) (Anacystis nidulans R2), this protein is Ribonuclease HII.